A 253-amino-acid polypeptide reads, in one-letter code: tRNA pseudouridine synthase A (253 aa).

Residue Asp53 is the Nucleophile of the active site. Tyr112 is a binding site for substrate.

This sequence belongs to the tRNA pseudouridine synthase TruA family. As to quaternary structure, homodimer.

It catalyses the reaction uridine(38/39/40) in tRNA = pseudouridine(38/39/40) in tRNA. In terms of biological role, formation of pseudouridine at positions 38, 39 and 40 in the anticodon stem and loop of transfer RNAs. This Lactococcus lactis subsp. lactis (strain IL1403) (Streptococcus lactis) protein is tRNA pseudouridine synthase A.